A 475-amino-acid chain; its full sequence is 3-isopropylmalate dehydratase large subunit (475 aa).

Positions 353, 414, and 417 each coordinate [4Fe-4S] cluster.

The protein belongs to the aconitase/IPM isomerase family. LeuC type 1 subfamily. As to quaternary structure, heterodimer of LeuC and LeuD. Requires [4Fe-4S] cluster as cofactor.

It catalyses the reaction (2R,3S)-3-isopropylmalate = (2S)-2-isopropylmalate. It participates in amino-acid biosynthesis; L-leucine biosynthesis; L-leucine from 3-methyl-2-oxobutanoate: step 2/4. Functionally, catalyzes the isomerization between 2-isopropylmalate and 3-isopropylmalate, via the formation of 2-isopropylmaleate. The chain is 3-isopropylmalate dehydratase large subunit from Marinomonas sp. (strain MWYL1).